The following is a 310-amino-acid chain: Aspartate carbamoyltransferase catalytic subunit (310 aa).

Residues Arg58 and Thr59 each coordinate carbamoyl phosphate. Lys87 contacts L-aspartate. The carbamoyl phosphate site is built by Arg108, His136, and Gln139. Residues Arg169 and Arg229 each coordinate L-aspartate. Carbamoyl phosphate is bound by residues Leu268 and Pro269.

The protein belongs to the aspartate/ornithine carbamoyltransferase superfamily. ATCase family. As to quaternary structure, heterododecamer (2C3:3R2) of six catalytic PyrB chains organized as two trimers (C3), and six regulatory PyrI chains organized as three dimers (R2).

It carries out the reaction carbamoyl phosphate + L-aspartate = N-carbamoyl-L-aspartate + phosphate + H(+). It participates in pyrimidine metabolism; UMP biosynthesis via de novo pathway; (S)-dihydroorotate from bicarbonate: step 2/3. Functionally, catalyzes the condensation of carbamoyl phosphate and aspartate to form carbamoyl aspartate and inorganic phosphate, the committed step in the de novo pyrimidine nucleotide biosynthesis pathway. The sequence is that of Aspartate carbamoyltransferase catalytic subunit from Leptospira biflexa serovar Patoc (strain Patoc 1 / Ames).